The sequence spans 67 residues: Large ribosomal subunit protein eL38 (67 aa).

It belongs to the eukaryotic ribosomal protein eL38 family.

This chain is Large ribosomal subunit protein eL38 (rpl38e), found in Aeropyrum pernix (strain ATCC 700893 / DSM 11879 / JCM 9820 / NBRC 100138 / K1).